Reading from the N-terminus, the 62-residue chain is MEWKTCSFCEGTIEPGCGKKYVKKDGSVMHFCSSKCEKNFKLGRVGRKLKWTNTFKRINRGQ.

Positions 6, 9, 32, and 36 each coordinate Zn(2+). The segment at 6-36 adopts a C4-type zinc-finger fold; it reads CSFCEGTIEPGCGKKYVKKDGSVMHFCSSKC.

This sequence belongs to the eukaryotic ribosomal protein eL24 family. As to quaternary structure, part of the 50S ribosomal subunit. Forms a cluster with proteins L3 and L14. Requires Zn(2+) as cofactor.

Functionally, binds to the 23S rRNA. The polypeptide is Large ribosomal subunit protein eL24 (Methanococcus maripaludis (strain C5 / ATCC BAA-1333)).